Here is a 405-residue protein sequence, read N- to C-terminus: NADH-quinone oxidoreductase subunit D (405 aa).

The protein belongs to the complex I 49 kDa subunit family. NDH-1 is composed of 14 different subunits. Subunits NuoB, C, D, E, F, and G constitute the peripheral sector of the complex.

The protein resides in the cell inner membrane. It catalyses the reaction a quinone + NADH + 5 H(+)(in) = a quinol + NAD(+) + 4 H(+)(out). Functionally, NDH-1 shuttles electrons from NADH, via FMN and iron-sulfur (Fe-S) centers, to quinones in the respiratory chain. The immediate electron acceptor for the enzyme in this species is believed to be ubiquinone. Couples the redox reaction to proton translocation (for every two electrons transferred, four hydrogen ions are translocated across the cytoplasmic membrane), and thus conserves the redox energy in a proton gradient. This is NADH-quinone oxidoreductase subunit D from Sphingopyxis alaskensis (strain DSM 13593 / LMG 18877 / RB2256) (Sphingomonas alaskensis).